The chain runs to 180 residues: ATP synthase subunit b 2 (180 aa).

The helical transmembrane segment at 33–53 (IFWLLVTLVAIYFLLTRVALP) threads the bilayer.

It belongs to the ATPase B chain family. In terms of assembly, F-type ATPases have 2 components, F(1) - the catalytic core - and F(0) - the membrane proton channel. F(1) has five subunits: alpha(3), beta(3), gamma(1), delta(1), epsilon(1). F(0) has three main subunits: a(1), b(2) and c(10-14). The alpha and beta chains form an alternating ring which encloses part of the gamma chain. F(1) is attached to F(0) by a central stalk formed by the gamma and epsilon chains, while a peripheral stalk is formed by the delta and b chains.

The protein resides in the cell inner membrane. Its function is as follows. F(1)F(0) ATP synthase produces ATP from ADP in the presence of a proton or sodium gradient. F-type ATPases consist of two structural domains, F(1) containing the extramembraneous catalytic core and F(0) containing the membrane proton channel, linked together by a central stalk and a peripheral stalk. During catalysis, ATP synthesis in the catalytic domain of F(1) is coupled via a rotary mechanism of the central stalk subunits to proton translocation. Component of the F(0) channel, it forms part of the peripheral stalk, linking F(1) to F(0). The b'-subunit is a diverged and duplicated form of b found in plants and photosynthetic bacteria. This chain is ATP synthase subunit b 2 (atpF2), found in Cereibacter sphaeroides (strain ATCC 17029 / ATH 2.4.9) (Rhodobacter sphaeroides).